Consider the following 253-residue polypeptide: Tryptophan synthase alpha chain (253 aa).

Active-site proton acceptor residues include glutamate 45 and aspartate 56.

The protein belongs to the TrpA family. Tetramer of two alpha and two beta chains.

The catalysed reaction is (1S,2R)-1-C-(indol-3-yl)glycerol 3-phosphate + L-serine = D-glyceraldehyde 3-phosphate + L-tryptophan + H2O. Its pathway is amino-acid biosynthesis; L-tryptophan biosynthesis; L-tryptophan from chorismate: step 5/5. Its function is as follows. The alpha subunit is responsible for the aldol cleavage of indoleglycerol phosphate to indole and glyceraldehyde 3-phosphate. The protein is Tryptophan synthase alpha chain of Flavobacterium psychrophilum (strain ATCC 49511 / DSM 21280 / CIP 103535 / JIP02/86).